Consider the following 224-residue polypeptide: Elongation factor 1-beta 2 (224 aa).

Alanine 2 carries the post-translational modification N-acetylalanine. Positions 14 to 65 (VKSVEEHLAGKTYISGDQLSVDDVKVYAAVPVKPSDAFPNASKWYESVASQL) constitute a GST C-terminal domain. The disordered stretch occupies residues 89–139 (EAEAPAAAADDDDDMDLFGDETEEEKKAAEEREAAKKDTKKPKESGKSSVL). Residues 97 to 111 (ADDDDDMDLFGDETE) show a composition bias toward acidic residues. Over residues 112–134 (EEKKAAEEREAAKKDTKKPKESG) the composition is skewed to basic and acidic residues.

This sequence belongs to the EF-1-beta/EF-1-delta family. In terms of assembly, EF-1 is composed of 4 subunits: alpha, beta (1B-alpha=beta'), delta (1B-beta), and gamma (1B-gamma).

In terms of biological role, EF-1-beta and EF-1-delta stimulate the exchange of GDP bound to EF-1-alpha to GTP. The sequence is that of Elongation factor 1-beta 2 from Arabidopsis thaliana (Mouse-ear cress).